The sequence spans 313 residues: Olfactory receptor 1J4 (313 aa).

Residues Met-1–Ala-25 are Extracellular-facing. An N-linked (GlcNAc...) asparagine glycan is attached at Asn-5. Residues Val-26–Ile-49 form a helical membrane-spanning segment. Over Arg-50–Thr-57 the chain is Cytoplasmic. The helical transmembrane segment at Pro-58 to Pro-79 threads the bilayer. Residues Lys-80 to Gln-100 are Extracellular-facing. A disulfide bond links Cys-97 and Cys-189. The helical transmembrane segment at Met-101 to Tyr-120 threads the bilayer. Over Asp-121–Gly-139 the chain is Cytoplasmic. Residues Leu-140 to Ser-158 form a helical membrane-spanning segment. Residues His-159–Asn-195 are Extracellular-facing. The helical transmembrane segment at Glu-196 to Gly-219 threads the bilayer. The Cytoplasmic portion of the chain corresponds to His-220–Lys-236. A helical membrane pass occupies residues Ala-237–Tyr-259. Residues Phe-260 to Val-272 lie on the Extracellular side of the membrane. Residues Ile-273 to Leu-292 form a helical membrane-spanning segment. Over Arg-293 to Gln-313 the chain is Cytoplasmic.

Belongs to the G-protein coupled receptor 1 family.

The protein localises to the cell membrane. Odorant receptor. This chain is Olfactory receptor 1J4 (OR1J4), found in Homo sapiens (Human).